The chain runs to 98 residues: snRNA-activating protein complex subunit 5 (98 aa).

Over residues 73–82 (QTTLELSTKS) the composition is skewed to polar residues. The interval 73–98 (QTTLELSTKSHVTEEEEEEEEEESDS) is disordered. At T85 the chain carries Phosphothreonine. Acidic residues predominate over residues 86–98 (EEEEEEEEEESDS).

As to quaternary structure, part of the SNAPc complex composed of 5 subunits: SNAPC1, SNAPC2, SNAPC3, SNAPC4 and SNAPC5. SNAPC5 interacts with SNAPC4.

It localises to the nucleus. Functionally, part of the SNAPc complex required for the transcription of both RNA polymerase II and III small-nuclear RNA genes. Binds to the proximal sequence element (PSE), a non-TATA-box basal promoter element common to these 2 types of genes. Recruits TBP and BRF2 to the U6 snRNA TATA box. The chain is snRNA-activating protein complex subunit 5 (SNAPC5) from Homo sapiens (Human).